A 317-amino-acid polypeptide reads, in one-letter code: MLRQVKPKNARTKRALEKREPKLVEGAKTAIFLRGNATSQISLDVLGDIHALKKPFSVNFQKKNNILPFEDASSLEFFSEKNDAALAVMATHNKKRPHNLTWVRFFNYRVLDMIELGIVNYKSIQSFSATPIVPGTKPMILFQGPVFDAHPTYRHIKSLFLDFFRGEPIQKLDSAGLSYVIVVSAAEAQEDETKPLPLVHFRVYGTKLLKTKTNLPRVELEEMGPRIDFNIRRVQPAESDVLEEALKKPKTQEPKPKKNVDVDIIGNKVGRIHVDQQDLGNLQTRKMKGLKRSVEEREDSENEEVEIEEDVISDASE.

One can recognise a Brix domain in the interval 28–240; that stretch reads KTAIFLRGNA…IRRVQPAESD (213 aa). The disordered stretch occupies residues 287–317; sequence MKGLKRSVEEREDSENEEVEIEEDVISDASE. A phosphoserine mark is found at serine 293, serine 300, serine 313, and serine 316. Residues 296 to 317 show a composition bias toward acidic residues; that stretch reads EREDSENEEVEIEEDVISDASE.

The protein belongs to the RPF2 family. As to quaternary structure, component of a hexameric 5S RNP precursor complex, composed of 5S RNA, rrs1, rpf2, rpl5a/rpl5b, rpl11a/rpl11b and syo1; this complex acts as a precursor for ribosome assembly.

It localises to the nucleus. The protein localises to the nucleolus. This chain is Ribosome production factor 2 homolog, found in Schizosaccharomyces pombe (strain 972 / ATCC 24843) (Fission yeast).